A 607-amino-acid polypeptide reads, in one-letter code: MAHILGIDLGTTNSCMAVIEGGQPVVIPNAEGFRTTPSVVAFTKTGERLVGHAAKRQAITNPERTIISIKRDMGTNKRIKIDDKEYSPEEISAMILMKLKADAEAYLGEKITQAVITVPAYFTDSQRQATKNAGRIAGLEVLRIINEPTAAALAYGLDKEGHQKIMVYDLGGGTFDVSILEIGDGVIEVLATSGNNRLGGDDFDQRIIDYIADEFMKEHGIDLRQDKVALQRLKDAAERAKIELSSALQTTINLPFITADANGPKHIDMVLTRAKFEELIKDLVEKTREPVETALSDAKLTPEQIDKVILVGGSTRIPYVQEFVKKLTGKEPFKGINPDECVAIGAAIQAGVLAGQVKDILLLDVTPLSLGIETLGGVFTKIIERNTTIPTRKSQIFTTAVDGQTQVEIHVLQGERPLAKDNKTLGRFILDGIPPAPRGVPQIEVTFDIDANGIVHVSAKDLGTGREQKITITSQTHLSEEEIQRAIKEAEMYAEQDRKRKELIEARNRADSIIYQTEKLLRELGDKMTETEKQQIESKLKALKDVMNGEDKEQIERAIDELTKSFYDVSTRLYQQGYTASGPQGGPNPGGGQSGPDGNVNTDYKVY.

The residue at position 174 (Thr174) is a Phosphothreonine; by autocatalysis. Residues Gly577–Tyr607 are disordered. Residues Pro583 to Gly595 show a composition bias toward gly residues.

This sequence belongs to the heat shock protein 70 family.

Functionally, acts as a chaperone. The polypeptide is Chaperone protein DnaK (Caldicellulosiruptor bescii (strain ATCC BAA-1888 / DSM 6725 / KCTC 15123 / Z-1320) (Anaerocellum thermophilum)).